Reading from the N-terminus, the 156-residue chain is Small ribosomal subunit protein uS7 (156 aa).

It belongs to the universal ribosomal protein uS7 family. As to quaternary structure, part of the 30S ribosomal subunit. Contacts proteins S9 and S11.

Its function is as follows. One of the primary rRNA binding proteins, it binds directly to 16S rRNA where it nucleates assembly of the head domain of the 30S subunit. Is located at the subunit interface close to the decoding center, probably blocks exit of the E-site tRNA. This is Small ribosomal subunit protein uS7 from Geobacter sp. (strain M21).